A 582-amino-acid chain; its full sequence is ATP-dependent lipid A-core flippase (582 aa).

5 helical membrane-spanning segments follow: residues 25–45, 69–89, 137–159, 253–273, and 275–295; these read AGLI…TFML, LAVI…SYCI, ASSS…LFIM, PIIQ…ASFP, and VMET…IALM. The ABC transmembrane type-1 domain occupies 28–310; sequence IVAAIALILN…LTNVNTQFQR (283 aa). The ABC transporter domain maps to 342–578; sequence IEFRHVTFYY…QGVYAQLNRM (237 aa). 376–383 contributes to the ATP binding site; the sequence is GRSGSGKS.

Belongs to the ABC transporter superfamily. Lipid exporter (TC 3.A.1.106) family. Homodimer.

The protein resides in the cell inner membrane. It carries out the reaction ATP + H2O + lipid A-core oligosaccharideSide 1 = ADP + phosphate + lipid A-core oligosaccharideSide 2.. Involved in lipopolysaccharide (LPS) biosynthesis. Translocates lipid A-core from the inner to the outer leaflet of the inner membrane. Transmembrane domains (TMD) form a pore in the inner membrane and the ATP-binding domain (NBD) is responsible for energy generation. The chain is ATP-dependent lipid A-core flippase from Yersinia pestis bv. Antiqua (strain Antiqua).